The sequence spans 488 residues: Inosine-5'-monophosphate dehydrogenase (488 aa).

CBS domains follow at residues 95-153 (VITN…SIKI) and 157-213 (MTKE…PHAA). NAD(+)-binding positions include Asp250 and 300–302 (GIG). Residues Gly302 and Gly304 each coordinate K(+). Ser305 contributes to the IMP binding site. Cys307 is a binding site for K(+). The Thioimidate intermediate role is filled by Cys307. IMP is bound by residues 340-342 (DGG), 363-364 (GS), and 387-391 (YRGMG). The active-site Proton acceptor is the Arg403. Glu417 is an IMP binding site. Residues 467 to 488 (AGLAESHPHNVQITKESPNYSF) form a disordered region. Residues Glu471, Ser472, and His473 each coordinate K(+). The segment covering 475–488 (HNVQITKESPNYSF) has biased composition (polar residues).

It belongs to the IMPDH/GMPR family. In terms of assembly, homotetramer. Requires K(+) as cofactor.

The catalysed reaction is IMP + NAD(+) + H2O = XMP + NADH + H(+). It participates in purine metabolism; XMP biosynthesis via de novo pathway; XMP from IMP: step 1/1. Its activity is regulated as follows. Mycophenolic acid (MPA) is a non-competitive inhibitor that prevents formation of the closed enzyme conformation by binding to the same site as the amobile flap. In contrast, mizoribine monophosphate (MZP) is a competitive inhibitor that induces the closed conformation. MPA is a potent inhibitor of mammalian IMPDHs but a poor inhibitor of the bacterial enzymes. MZP is a more potent inhibitor of bacterial IMPDH. Functionally, catalyzes the conversion of inosine 5'-phosphate (IMP) to xanthosine 5'-phosphate (XMP), the first committed and rate-limiting step in the de novo synthesis of guanine nucleotides, and therefore plays an important role in the regulation of cell growth. The sequence is that of Inosine-5'-monophosphate dehydrogenase from Staphylococcus haemolyticus (strain JCSC1435).